The chain runs to 464 residues: Kynurenine 3-monooxygenase (464 aa).

Belongs to the aromatic-ring hydroxylase family. KMO subfamily. FAD serves as cofactor.

It carries out the reaction L-kynurenine + NADPH + O2 + H(+) = 3-hydroxy-L-kynurenine + NADP(+) + H2O. Its pathway is cofactor biosynthesis; NAD(+) biosynthesis; quinolinate from L-kynurenine: step 1/3. In terms of biological role, catalyzes the hydroxylation of L-kynurenine (L-Kyn) to form 3-hydroxy-L-kynurenine (L-3OHKyn). Required for synthesis of quinolinic acid. The chain is Kynurenine 3-monooxygenase from Myxococcus xanthus (strain DK1622).